Here is a 163-residue protein sequence, read N- to C-terminus: MAATVKQHVQLALSLPPRLRTFLARYPPASILPAGADPETHKTPYQEESPNPFMPTKHPITGKWHNPKYSLRRQAELVKLAQEHGVEELLPFTRKLNEEKLRKRVELGLRVKGTGVGEKVKGHKHERTLVAKMEKRREAMLAMPDLIREWKKVGKRNWTKFPK.

The disordered stretch occupies residues Pro-33 to Phe-53.

This sequence belongs to the mitochondrion-specific ribosomal protein mL59 family. As to quaternary structure, component of the mitochondrial large ribosomal subunit (mt-LSU). Mature N.crassa 74S mitochondrial ribosomes consist of a small (37S) and a large (54S) subunit. The 37S small subunit contains a 16S ribosomal RNA (16S mt-rRNA) and 32 different proteins. The 54S large subunit contains a 23S rRNA (23S mt-rRNA) and 42 different proteins.

The protein localises to the mitochondrion. In terms of biological role, component of the mitochondrial ribosome (mitoribosome), a dedicated translation machinery responsible for the synthesis of mitochondrial genome-encoded proteins, including at least some of the essential transmembrane subunits of the mitochondrial respiratory chain. The mitoribosomes are attached to the mitochondrial inner membrane and translation products are cotranslationally integrated into the membrane. The polypeptide is Large ribosomal subunit protein mL59 (mrpl25) (Neurospora crassa (strain ATCC 24698 / 74-OR23-1A / CBS 708.71 / DSM 1257 / FGSC 987)).